Here is a 112-residue protein sequence, read N- to C-terminus: MQAKAIAKYVRISPLKVNFICKEIRGKQVDEALAILKFTPKKGARILEKVLNSAIANAEHNFGLNREDLFVSQAYANNAPVMKRWRPKAKGMAYPILKRSSHVGVVVEEREL.

It belongs to the universal ribosomal protein uL22 family. In terms of assembly, part of the 50S ribosomal subunit.

Functionally, this protein binds specifically to 23S rRNA; its binding is stimulated by other ribosomal proteins, e.g. L4, L17, and L20. It is important during the early stages of 50S assembly. It makes multiple contacts with different domains of the 23S rRNA in the assembled 50S subunit and ribosome. The globular domain of the protein is located near the polypeptide exit tunnel on the outside of the subunit, while an extended beta-hairpin is found that lines the wall of the exit tunnel in the center of the 70S ribosome. The chain is Large ribosomal subunit protein uL22 from Finegoldia magna (strain ATCC 29328 / DSM 20472 / WAL 2508) (Peptostreptococcus magnus).